The sequence spans 357 residues: G-protein coupled receptor 183 (357 aa).

Residues 1–32 lie on the Extracellular side of the membrane; sequence MANNFTTPLAASHGNNCDLYAHHSTARILMPL. A glycan (N-linked (GlcNAc...) asparagine) is linked at Asn4. Residues 33–53 traverse the membrane as a helical segment; sequence HYSLVFIIGLVGNLLALVVIV. Residues 54–68 lie on the Cytoplasmic side of the membrane; the sequence is QNRKKINSTTLYSMN. Residues 69–89 traverse the membrane as a helical segment; sequence LVISDILFTTALPTRIVYYAL. Arg83 contacts 7alpha,25-dihydroxycholesterol. Residues 90 to 101 lie on the Extracellular side of the membrane; the sequence is GFDWRIGDALCR. The cysteines at positions 100 and 177 are disulfide-linked. Residues 102-122 form a helical membrane-spanning segment; sequence ITALLFYINTYAGVNFMTCLS. 7alpha,25-dihydroxycholesterol-binding residues include Tyr108 and Tyr112. The segment at 122–130 is interaction with G proteins; the sequence is SIDRFFAVV. At 123–143 the chain is on the cytoplasmic side; sequence IDRFFAVVHPLRYNKIKRIEY. Residues 144-164 traverse the membrane as a helical segment; it reads AKGICVFVWILVFAQTLPLLL. Residues 165 to 190 are Extracellular-facing; it reads KPMSKQEADKTTCMEYPNFEGTASLP. Residues 191–211 traverse the membrane as a helical segment; that stretch reads WILLGACLLGYVLPLAIILLC. Residues 212-240 are Cytoplasmic-facing; it reads YSQICCKLFRTAKQNPLTEKSGVNKKALN. A helical membrane pass occupies residues 241-261; that stretch reads TIILIIGVFVLCFTPYHVAIM. Tyr256 is a 7alpha,25-dihydroxycholesterol binding site. Residues 262-287 are Extracellular-facing; the sequence is QHMVKTLYAPGALGCGVRHSFQISLH. Residues 288-308 form a helical membrane-spanning segment; it reads FTVCLMNFNCCMDPFIYFFAC. Residues 309-357 lie on the Cytoplasmic side of the membrane; sequence KGYKRKVMKMLKRQVSVSISSAVRSAPEENSREMTESQMMIHSKASNGR. Phosphoserine occurs at positions 324 and 345. The disordered stretch occupies residues 336-357; it reads EENSREMTESQMMIHSKASNGR. Polar residues predominate over residues 344-357; that stretch reads ESQMMIHSKASNGR.

The protein belongs to the G-protein coupled receptor 1 family. As to quaternary structure, homodimer and heterodimer. Heterodimerizes with CXCR5; leading to modulate the interaction between of CXCL13 and CXCR5.

It localises to the cell membrane. G-protein coupled receptor expressed in lymphocytes that acts as a chemotactic receptor for B-cells, T-cells, splenic dendritic cells, monocytes/macrophages and astrocytes. Receptor for oxysterol 7-alpha,25-dihydroxycholesterol (7-alpha,25-OHC) and other related oxysterols. Mediates cell positioning and movement of a number of cells by binding the 7-alpha,25-OHC ligand that forms a chemotactic gradient. Binding of 7-alpha,25-OHC mediates the correct localization of B-cells during humoral immune responses. Guides B-cell movement along the B-cell zone-T-cell zone boundary and later to interfollicular and outer follicular regions. Its specific expression during B-cell maturation helps position B-cells appropriately for mounting T-dependent antibody responses. Collaborates with CXCR5 to mediate B-cell migration; probably by forming a heterodimer with CXCR5 that affects the interaction between of CXCL13 and CXCR5. Also acts as a chemotactic receptor for some T-cells upon binding to 7-alpha,25-OHC ligand. Promotes follicular helper T (Tfh) cells differentiation by positioning activated T-cells at the follicle-T-zone interface, promoting contact of newly activated CD4 T-cells with activated dendritic cells and exposing them to Tfh-cell-promoting inducible costimulator (ICOS) ligand. Expression in splenic dendritic cells is required for their homeostasis, localization and ability to induce B- and T-cell responses: GPR183 acts as a chemotactic receptor in dendritic cells that mediates the accumulation of CD4(+) dendritic cells in bridging channels. Regulates migration of astrocytes and is involved in communication between astrocytes and macrophages. Promotes osteoclast precursor migration to bone surfaces. Signals constitutively through G(i)-alpha, but not G(s)-alpha or G(q)-alpha. Signals constitutively also via MAPK1/3 (ERK1/2). The protein is G-protein coupled receptor 183 (Gpr183) of Rattus norvegicus (Rat).